The chain runs to 423 residues: Putative competence-damage inducible protein (423 aa).

It belongs to the CinA family.

In Streptococcus pyogenes serotype M18 (strain MGAS8232), this protein is Putative competence-damage inducible protein.